A 940-amino-acid polypeptide reads, in one-letter code: Isoleucine--tRNA ligase (940 aa).

Positions P58–H68 match the 'HIGH' region motif. E564 contacts L-isoleucyl-5'-AMP. The 'KMSKS' region signature appears at K605 to S609. An ATP-binding site is contributed by K608. Zn(2+) contacts are provided by C903, C906, C923, and C926.

Belongs to the class-I aminoacyl-tRNA synthetase family. IleS type 1 subfamily. As to quaternary structure, monomer. Requires Zn(2+) as cofactor.

It is found in the cytoplasm. The enzyme catalyses tRNA(Ile) + L-isoleucine + ATP = L-isoleucyl-tRNA(Ile) + AMP + diphosphate. Catalyzes the attachment of isoleucine to tRNA(Ile). As IleRS can inadvertently accommodate and process structurally similar amino acids such as valine, to avoid such errors it has two additional distinct tRNA(Ile)-dependent editing activities. One activity is designated as 'pretransfer' editing and involves the hydrolysis of activated Val-AMP. The other activity is designated 'posttransfer' editing and involves deacylation of mischarged Val-tRNA(Ile). This Shewanella baltica (strain OS155 / ATCC BAA-1091) protein is Isoleucine--tRNA ligase.